Reading from the N-terminus, the 205-residue chain is Guanylate kinase (205 aa).

The region spanning serine 17 to phenylalanine 195 is the Guanylate kinase-like domain. Glycine 24–aspartate 31 is an ATP binding site.

It belongs to the guanylate kinase family.

It localises to the cytoplasm. It catalyses the reaction GMP + ATP = GDP + ADP. Essential for recycling GMP and indirectly, cGMP. This Gloeobacter violaceus (strain ATCC 29082 / PCC 7421) protein is Guanylate kinase.